The chain runs to 117 residues: Appetite-regulating hormone (117 aa).

An N-terminal signal peptide occupies residues 1–23 (MPSPGTVCSLLLLGMLWLDLAMA). A lipid anchor (O-decanoyl serine; alternate) is attached at S26. S26 is lipidated: O-hexanoyl serine; alternate. A lipid anchor (O-octanoyl serine; alternate) is attached at S26. The segment at 29–50 (SPEHQRVQQRKESKKPPAKLQP) is disordered. Residues 31-43 (EHQRVQQRKESKK) show a composition bias toward basic and acidic residues. Positions 52–75 (ALAGWLRPEDGGQAEGAEDELEVR) are cleaved as a propeptide — removed in mature form. The residue at position 98 (L98) is a Leucine amide. A propeptide spans 99–117 (GKFLQDILWEEAKEAPADK) (removed in mature form).

This sequence belongs to the motilin family. O-octanoylated by GOAT/MBOAT4. O-octanoylation or O-decanoylation is essential for ghrelin activity. The O-decanoylated forms Ghrelin-27-C10 and Ghrelin-28-C10 differ in the length of the carbon backbone of the carboxylic acid bound to Ser-26. A small fraction of ghrelin, ghrelin-28-C10:1, may be modified with a singly unsaturated carboxylic acid. Also O-acetylated and O-butyrylated on Ser-26 to minor levels. Post-translationally, amidation of Leu-98 is essential for obestatin activity. Highest level in stomach. All forms are found in serum as well. Other tissues compensate for the loss of ghrelin synthesis in the stomach following gastrectomy.

It is found in the secreted. Functionally, ghrelin is the ligand for growth hormone secretagogue receptor type 1 (GHSR). Induces the release of growth hormone from the pituitary. Has an appetite-stimulating effect, induces adiposity and stimulates gastric acid secretion. Involved in growth regulation. In terms of biological role, may be the ligand for GPR39. May have an appetite-reducing effect resulting in decreased food intake. May reduce gastric emptying activity and jejunal motility. This is Appetite-regulating hormone (GHRL) from Homo sapiens (Human).